A 520-amino-acid polypeptide reads, in one-letter code: Genome polyprotein (520 aa).

The residue at position 2 (Ser2) is an N-acetylserine; by host. The interval 2–23 is interaction with STAT1; that stretch reads STNPKPQRKTKRNTNRRPQDVK. Residues 2-58 are interaction with EIF2AK2/PKR; that stretch reads STNPKPQRKTKRNTNRRPQDVKFPGGGQIVGGVYLLTRRGPRLGVRATRKTSERSQP. Residues 2–59 are interaction with DDX3X; the sequence is STNPKPQRKTKRNTNRRPQDVKFPGGGQIVGGVYLLTRRGPRLGVRATRKTSERSQPR. Residues 2-75 form a disordered region; the sequence is STNPKPQRKT…PKARRPEGRA (74 aa). Residues 2-168 are Cytoplasmic-facing; that stretch reads STNPKPQRKT…EDGVNYATGN (167 aa). Short sequence motifs (nuclear localization signal) lie at residues 5–13 and 38–43; these read PKPQRKTKR and TRRGPR. Positions 7-16 are enriched in basic residues; sequence PQRKTKRNTN. At Ser53 the chain carries Phosphoserine; by host. 2 consecutive short sequence motifs (nuclear localization signal) follow at residues 58-64 and 66-71; these read PRGRRQP and PKARRP. The segment covering 58–68 has biased composition (basic residues); the sequence is PRGRRQPIPKA. The residue at position 99 (Ser99) is a Phosphoserine; by host. Residues 112 to 152 are important for endoplasmic reticulum and mitochondrial localization; the sequence is PRRRSRNLGKVIDTLTCGFADLMGYIPLVGAPLGGASRALA. Ser116 is subject to Phosphoserine; by host PKA. Residues 122–173 are interaction with APOA2; sequence VIDTLTCGFADLMGYIPLVGAPLGGASRALAHGVRVLEDGVNYATGNLPGCS. The tract at residues 164 to 167 is important for lipid droplets localization; the sequence is YATG. A helical membrane pass occupies residues 169-189; sequence LPGCSFSIFLSALMSCLTTPA. Positions 178–191 are cleaved as a propeptide — ER anchor for the core protein, removed in mature form by host signal peptidase; that stretch reads LSALMSCLTTPASA. Residues 190 to 358 lie on the Lumenal side of the membrane; that stretch reads SAYEVRNVSG…AGAHWGVLAG (169 aa). N-linked (GlcNAc...) asparagine; by host glycosylation is found at Asn196, Asn209, Asn234, and Asn250. The interval 265–296 is important for fusion; that stretch reads LVGAATLCSAMYVGDLCGSVFLVSQLFTFSPR. N-linked (GlcNAc...) asparagine; by host glycosylation occurs at Asn305. A helical transmembrane segment spans residues 359–379; the sequence is LAYYSMVGNWAKVLIVMLLFA. Topologically, residues 380 to 520 are lumenal; sequence GVDGANTHTV…TPSPVVVGTT (141 aa). The interval 385 to 411 is HVR1; it reads NTHTVGGTEGFATQRLTSLFALGPSQK. Asn418 carries an N-linked (GlcNAc...) asparagine; by host glycan. N-linked (GlcNAc...) (high mannose) asparagine; by host glycosylation is found at Asn424, Asn431, and Asn449. The cysteines at positions 453 and 460 are disulfide-linked. Residues 474-479 form an HVR2 region; it reads TYAEPS. A CD81-binding 1 region spans residues 480–493; sequence ISEQRPYCWHYAPR. 2 disulfide bridges follow: Cys487-Cys495 and Cys504-Cys509.

Belongs to the hepacivirus polyprotein family. In terms of assembly, homooligomer. Interacts with E1 (via C-terminus). Interacts with the non-structural protein 5A. Interacts (via N-terminus) with host STAT1 (via SH2 domain); this interaction results in decreased STAT1 phosphorylation and ubiquitin-mediated proteasome-dependent STAT1 degradation, leading to decreased IFN-stimulated gene transcription. Interacts with host STAT3; this interaction constitutively activates STAT3. Interacts with host LTBR receptor. Interacts with host TNFRSF1A receptor and possibly induces apoptosis. Interacts with host HNRPK. Interacts with host YWHAE. Interacts with host UBE3A/E6AP. Interacts with host DDX3X. Interacts with host APOA2. Interacts with host RXRA protein. Interacts with host SP110 isoform 3/Sp110b; this interaction sequesters the transcriptional corepressor SP110 away from the nucleus. Interacts with host CREB3 nuclear transcription protein; this interaction triggers cell transformation. Interacts with host ACY3. Interacts with host C1QR1. Interacts with host RBM24; this interaction, which enhances the interaction of the mature core protein with 5'-UTR, may inhibit viral translation and favor replication. Interacts with host EIF2AK2/PKR; this interaction induces the autophosphorylation of EIF2AK2. Part of the viral assembly initiation complex composed of NS2, E1, E2, NS3, NS4A, NS5A and the mature core protein. As to quaternary structure, forms a heterodimer with envelope glycoprotein E2. Interacts with mature core protein. Interacts with protease NS2. The heterodimer E1/E2 interacts with host CLDN1; this interaction plays a role in viral entry into host cell. Interacts with host SPSB2 (via C-terminus). Part of the viral assembly initiation complex composed of NS2, E1, E2, NS3, NS4A, NS5A and the mature core protein. Forms a heterodimer with envelope glycoprotein E1. Interacts with host CD81 and SCARB1 receptors; these interactions play a role in viral entry into host cell. Interacts with host EIF2AK2/PKR; this interaction inhibits EIF2AK2 and probably allows the virus to evade the innate immune response. Interacts with host CD209/DC-SIGN and CLEC4M/DC-SIGNR. Interact with host SPCS1; this interaction is essential for viral particle assembly. Interacts with protease NS2. The heterodimer E1/E2 interacts with host CLDN1; this interaction plays a role in viral entry into host cell. Part of the viral assembly initiation complex composed of NS2, E1, E2, NS3, NS4A, NS5A and the mature core protein. Post-translationally, specific enzymatic cleavages in vivo yield mature proteins. The structural proteins, core, E1, E2 and p7 are produced by proteolytic processing by host signal peptidases. The core protein precursor is synthesized as a 23 kDa, which is retained in the ER membrane through the hydrophobic signal peptide. Cleavage by the signal peptidase releases the 21 kDa mature core protein. The cleavage of the core protein precursor occurs between aminoacids 176 and 188 but the exact cleavage site is not known. Some degraded forms of the core protein appear as well during the course of infection. The other proteins (p7, NS2, NS3, NS4A, NS4B, NS5A and NS5B) are cleaved by the viral proteases. Autoprocessing between NS2 and NS3 is mediated by the NS2 cysteine protease catalytic domain and regulated by the NS3 N-terminal domain. In terms of processing, phosphorylated by host PKC and PKA. Ubiquitinated; mediated by UBE3A and leading to core protein subsequent proteasomal degradation. Post-translationally, highly N-glycosylated.

The protein localises to the host endoplasmic reticulum membrane. It localises to the host mitochondrion membrane. The protein resides in the virion. Its subcellular location is the host cytoplasm. It is found in the host nucleus. The protein localises to the host lipid droplet. It localises to the virion membrane. Its function is as follows. Packages viral RNA to form a viral nucleocapsid, and promotes virion budding. Participates in the viral particle production as a result of its interaction with the non-structural protein 5A. Binds RNA and may function as a RNA chaperone to induce the RNA structural rearrangements taking place during virus replication. Modulates viral translation initiation by interacting with viral IRES and 40S ribosomal subunit. Affects various cell signaling pathways, host immunity and lipid metabolism. Prevents the establishment of cellular antiviral state by blocking the interferon-alpha/beta (IFN-alpha/beta) and IFN-gamma signaling pathways and by blocking the formation of phosphorylated STAT1 and promoting ubiquitin-mediated proteasome-dependent degradation of STAT1. Activates STAT3 leading to cellular transformation. Regulates the activity of cellular genes, including c-myc and c-fos. May repress the promoter of p53, and sequester CREB3 and SP110 isoform 3/Sp110b in the cytoplasm. Represses cell cycle negative regulating factor CDKN1A, thereby interrupting an important check point of normal cell cycle regulation. Targets transcription factors involved in the regulation of inflammatory responses and in the immune response: suppresses TNF-induced NF-kappa-B activation, and activates AP-1. Binds to dendritic cells (DCs) via C1QR1, resulting in down-regulation of T-lymphocytes proliferation. Alters lipid metabolism by interacting with hepatocellular proteins involved in lipid accumulation and storage. Induces up-regulation of FAS promoter activity, and thereby contributes to the increased triglyceride accumulation in hepatocytes (steatosis). Functionally, forms a heterodimer with envelope glycoprotein E2, which mediates virus attachment to the host cell, virion internalization through clathrin-dependent endocytosis and fusion with host membrane. Fusion with the host cell is most likely mediated by both E1 and E2, through conformational rearrangements of the heterodimer required for fusion rather than a classical class II fusion mechanism. E1/E2 heterodimer binds host apolipoproteins such as APOB and ApoE thereby forming a lipo-viro-particle (LVP). APOE associated to the LVP allows the initial virus attachment to cell surface receptors such as the heparan sulfate proteoglycans (HSPGs), syndecan-1 (SDC1), syndecan-1 (SDC2), the low-density lipoprotein receptor (LDLR) and scavenger receptor class B type I (SCARB1). The cholesterol transfer activity of SCARB1 allows E2 exposure and binding of E2 to SCARB1 and the tetraspanin CD81. E1/E2 heterodimer binding on CD81 activates the epithelial growth factor receptor (EGFR) signaling pathway. Diffusion of the complex E1-E2-EGFR-SCARB1-CD81 to the cell lateral membrane allows further interaction with Claudin 1 (CLDN1) and occludin (OCLN) to finally trigger HCV entry. In terms of biological role, forms a heterodimer with envelope glycoprotein E1, which mediates virus attachment to the host cell, virion internalization through clathrin-dependent endocytosis and fusion with host membrane. Fusion with the host cell is most likely mediated by both E1 and E2, through conformational rearrangements of the heterodimer required for fusion rather than a classical class II fusion mechanism. The interaction between envelope glycoprotein E2 and host apolipoprotein E/APOE allows the proper assembly, maturation and infectivity of the viral particles. This interaction is probably promoted via the up-regulation of cellular autophagy by the virus. E1/E2 heterodimer binds host apolipoproteins such as APOB and APOE thereby forming a lipo-viro-particle (LVP). APOE associated to the LVP allows the initial virus attachment to cell surface receptors such as the heparan sulfate proteoglycans (HSPGs), syndecan-1 (SDC1), syndecan-1 (SDC2), the low-density lipoprotein receptor (LDLR) and scavenger receptor class B type I (SCARB1). The cholesterol transfer activity of SCARB1 allows E2 exposure and binding of E2 to SCARB1 and the tetraspanin CD81. E1/E2 heterodimer binding on CD81 activates the epithelial growth factor receptor (EGFR) signaling pathway. Diffusion of the complex E1-E2-EGFR-SCARB1-CD81 to the cell lateral membrane allows further interaction with Claudin 1 (CLDN1) and occludin (OCLN) to finally trigger HCV entry. Inhibits host EIF2AK2/PKR activation, preventing the establishment of an antiviral state. Viral ligand for CD209/DC-SIGN and CLEC4M/DC-SIGNR, which are respectively found on dendritic cells (DCs), and on liver sinusoidal endothelial cells and macrophage-like cells of lymph node sinuses. These interactions allow the capture of circulating HCV particles by these cells and subsequent facilitated transmission to permissive cells such as hepatocytes and lymphocyte subpopulations. This chain is Genome polyprotein, found in Hepatitis C virus (isolate HCV-KF) (HCV).